Here is a 116-residue protein sequence, read N- to C-terminus: Non-specific lipid-transfer protein 5 (116 aa).

Residues 1-24 (MARSMKLACVVLVMCMIVAPMAEG) form the signal peptide. 4 disulfide bridges follow: C28–C75, C38–C52, C53–C98, and C73–C112.

It belongs to the plant LTP family.

In terms of biological role, plant non-specific lipid-transfer proteins transfer phospholipids as well as galactolipids across membranes. May play a role in wax or cutin deposition in the cell walls of expanding epidermal cells and certain secretory tissues. This chain is Non-specific lipid-transfer protein 5, found in Lens culinaris (Lentil).